Here is a 340-residue protein sequence, read N- to C-terminus: Glycerol-3-phosphate dehydrogenase [NAD(P)+] (340 aa).

NADPH is bound by residues S11, W12, R32, R33, and K106. Residues K106, G138, and S140 each coordinate sn-glycerol 3-phosphate. An NADPH-binding site is contributed by A142. Sn-glycerol 3-phosphate is bound by residues K193, D246, S256, R257, and N258. K193 serves as the catalytic Proton acceptor. NADPH is bound at residue R257. Residues V281 and E283 each contribute to the NADPH site.

The protein belongs to the NAD-dependent glycerol-3-phosphate dehydrogenase family.

It is found in the cytoplasm. It carries out the reaction sn-glycerol 3-phosphate + NAD(+) = dihydroxyacetone phosphate + NADH + H(+). It catalyses the reaction sn-glycerol 3-phosphate + NADP(+) = dihydroxyacetone phosphate + NADPH + H(+). Its pathway is membrane lipid metabolism; glycerophospholipid metabolism. Catalyzes the reduction of the glycolytic intermediate dihydroxyacetone phosphate (DHAP) to sn-glycerol 3-phosphate (G3P), the key precursor for phospholipid synthesis. This Shouchella clausii (strain KSM-K16) (Alkalihalobacillus clausii) protein is Glycerol-3-phosphate dehydrogenase [NAD(P)+].